Reading from the N-terminus, the 403-residue chain is FAD-dependent monooxygenase tazP (403 aa).

Residues Gly75, Arg144, Asp354, and Ala367 each coordinate FAD.

This sequence belongs to the paxM FAD-dependent monooxygenase family. Requires FAD as cofactor.

It functions in the pathway secondary metabolite biosynthesis. FAD-dependent monooxygenase; part of the gene cluster that mediates the biosynthesis of azaterrilone A and other azaphilones, a class of fungal metabolites characterized by a highly oxygenated pyrano-quinone bicyclic core and exhibiting a broad range of bioactivities. The first step of the pathway begins with the non-reducing polyketide synthase tazA that assembles one acetyl-CoA starter unit, five malonyl-CoA units, and catalyzes a series of Claisen condensations, methylation, PT-mediated cyclization, and finally releases the first hexaketide precursor through the R-domain. The tazA product then undergoes reduction on its terminal ketone and the following pyran-ring formation by yet undetermined enzyme(s). Dehydration and enoyl reduction, possibly involving the trans-enoyl reductase tazE leads to the next intermediate. TazD is predicted as an acetyltransferase and might catalyze the acetylation steps leading to the synthesis of azaterrilone A. Azaterrilone A is not the final product of the taz pathway and both the highly reducing polyketide synthase tazB and the dual enzyme tazHJ catalyze late steps of the pathway, leading to the production of the 2 final stereoisomers that contain additional polyketide modification whose structures have still to be determined. This Aspergillus terreus (strain NIH 2624 / FGSC A1156) protein is FAD-dependent monooxygenase tazP.